A 291-amino-acid polypeptide reads, in one-letter code: Pituitary-specific positive transcription factor 1 (291 aa).

The 9aaTAD motif lies at Ala-5–Ile-13. The POU-specific domain occupies Met-124 to Glu-198. Positions Lys-214–Lys-273 form a DNA-binding region, homeobox.

This sequence belongs to the POU transcription factor family. Class-1 subfamily. As to quaternary structure, interacts with PITX1. Interacts with LHX3. Interacts with ELK1.

It is found in the nucleus. Its function is as follows. Transcription factor involved in the specification of the lactotrope, somatotrope, and thyrotrope phenotypes in the developing anterior pituitary. Activates growth hormone and prolactin genes. Specifically binds to the consensus sequence 5'-TAAAT-3'. This chain is Pituitary-specific positive transcription factor 1 (POU1F1), found in Macaca mulatta (Rhesus macaque).